We begin with the raw amino-acid sequence, 376 residues long: MPGDYYDILGVDRNASKEDLKRAYRRLARKYHPDVNKEPGAEERFKEINRAYEVLSEPDTRSRYDQFGEAGVSGAGGFNYGDMGDMGGFADIFETIFSGFGGGMGTGGTRRRTGPVKGDDLRLDLKLDFREAVFGGEKEIRIPHLETCQVCKGDGAKPGTGAKTCSTCNGQGQVRRATRTPFGSFAQVSACPACNGQGQVIEEKCEVCNGAGRRQVTEKVKITIPAGVDDGTRLRVSRKGDAGLRGGPQGDLYVYLYVEPDKVFTRDKMNILSEITISYLQAILGCTVTVDTVDGEQELTIPAGTQPNTILTLENLGVPKLGNDAIRGDHLITVKVDIPTRINAEERELLEKLAHIKGQSHGKGGLEGFLGSLFHK.

The J domain maps to 4-68; sequence DYYDILGVDR…DTRSRYDQFG (65 aa). The CR-type zinc-finger motif lies at 135 to 217; that stretch reads GGEKEIRIPH…CNGAGRRQVT (83 aa). Cysteine 148, cysteine 151, cysteine 165, cysteine 168, cysteine 191, cysteine 194, cysteine 205, and cysteine 208 together coordinate Zn(2+). CXXCXGXG motif repeat units lie at residues 148–155, 165–172, 191–198, and 205–212; these read CQVCKGDG, CSTCNGQG, CPACNGQG, and CEVCNGAG.

This sequence belongs to the DnaJ family. As to quaternary structure, homodimer. Requires Zn(2+) as cofactor.

The protein localises to the cytoplasm. In terms of biological role, participates actively in the response to hyperosmotic and heat shock by preventing the aggregation of stress-denatured proteins and by disaggregating proteins, also in an autonomous, DnaK-independent fashion. Unfolded proteins bind initially to DnaJ; upon interaction with the DnaJ-bound protein, DnaK hydrolyzes its bound ATP, resulting in the formation of a stable complex. GrpE releases ADP from DnaK; ATP binding to DnaK triggers the release of the substrate protein, thus completing the reaction cycle. Several rounds of ATP-dependent interactions between DnaJ, DnaK and GrpE are required for fully efficient folding. Also involved, together with DnaK and GrpE, in the DNA replication of plasmids through activation of initiation proteins. The sequence is that of Chaperone protein DnaJ from Crocosphaera subtropica (strain ATCC 51142 / BH68) (Cyanothece sp. (strain ATCC 51142)).